A 314-amino-acid polypeptide reads, in one-letter code: Olfactory receptor 5I1 (314 aa).

At 1-27 the chain is on the extracellular side; that stretch reads MEFTDRNYTLVTEFILLGFPTRPELQI. A glycan (N-linked (GlcNAc...) asparagine) is linked at asparagine 7. The chain crosses the membrane as a helical span at residues 28-48; that stretch reads VLFLMFLTLYAIILIGNIGLM. Residues 49 to 56 lie on the Cytoplasmic side of the membrane; that stretch reads LLIRIDPH. A helical transmembrane segment spans residues 57 to 77; the sequence is LQTPMYFFLSNLSFVDLCYFS. Over 78-101 the chain is Extracellular; the sequence is DIVPKMLVNFLSENKSISYYGCAL. Cysteine 99 and cysteine 191 are disulfide-bonded. The chain crosses the membrane as a helical span at residues 102–122; sequence QFYFFCTFADTESFILAAMAY. Over 123–141 the chain is Cytoplasmic; the sequence is DRYVAICNPLLYTVVMSRG. Residues 142–162 traverse the membrane as a helical segment; that stretch reads ICMRLIVLSYLGGNMSSLVHT. Topologically, residues 163-198 are extracellular; sequence SFAFILKYCDKNVINHFFCDLPPLLKLSCTDTTINE. Residues 199–219 form a helical membrane-spanning segment; it reads WLLSTYGSSVEIICFIIIIIS. Residues 220 to 239 are Cytoplasmic-facing; that stretch reads YFFILLSVLKIRSFSGRKKT. The helical transmembrane segment at 240-260 threads the bilayer; it reads FSTCASHLTSVTIYQGTLLFI. The Extracellular portion of the chain corresponds to 261–273; it reads YSRPSYLYSPNTD. Residues 274-294 form a helical membrane-spanning segment; that stretch reads KIISVFYTIFIPVLNPLIYSL. The Cytoplasmic portion of the chain corresponds to 295–314; that stretch reads RNKDVKDAAEKVLRSKVDSS.

Belongs to the G-protein coupled receptor 1 family.

It localises to the cell membrane. Its function is as follows. Odorant receptor. In Homo sapiens (Human), this protein is Olfactory receptor 5I1 (OR5I1).